We begin with the raw amino-acid sequence, 268 residues long: uncharacterized protein (268 aa).

One can recognise an HTH iclR-type domain in the interval 15-77; that stretch reads NQALIRGLRL…NAAGSYRLTI (63 aa). Positions 37–56 form a DNA-binding region, H-T-H motif; it reads LAKLAELANLNKSTAHRLLQ. The 174-residue stretch at 92–265 folds into the IclR-ED domain; it reads IIHVASPYLE…AEQISLELGY (174 aa).

This is an uncharacterized protein from Haemophilus influenzae (strain ATCC 51907 / DSM 11121 / KW20 / Rd).